The primary structure comprises 1030 residues: F-box/WD repeat-containing protein 10 (1030 aa).

The region spanning 280-329 is the F-box domain; that stretch reads RDFIRDLPLHLSKYILRMLDKHSLNRCIFVSQHWATLAQQVKVDQSMHSF. WD repeat units follow at residues 466–505, 508–547, 549–584, 587–624, and 626–667; these read GHAG…CVRI, GHQG…KTFK, KDPI…LQKT, GHEG…ERCL, and AFKH…KVIK. A disordered region spans residues 709 to 773; sequence KNKVKKSKDK…LSSDDMETPV (65 aa). Basic and acidic residues predominate over residues 716-733; that stretch reads KDKEEEREETSLGDEHSR. Positions 734 to 749 are enriched in polar residues; that stretch reads STIQGHSLKDSVSSKQ. A coiled-coil region spans residues 963 to 992; that stretch reads FMLMTVKEEKEFAEAKMKEYEASVSTKEVD.

Its function is as follows. Probable substrate-recognition component of a SCF (SKP1-CUL1-F-box protein)-type E3 ubiquitin ligase complex which mediates the ubiquitination and subsequent proteasomal degradation of target proteins. Overexpression is leading to degradation of CBX5 and CBX1. The sequence is that of F-box/WD repeat-containing protein 10 (Fbxw10) from Mus musculus (Mouse).